We begin with the raw amino-acid sequence, 109 residues long: Large ribosomal subunit protein uL1 (109 aa).

This sequence belongs to the universal ribosomal protein uL1 family. As to quaternary structure, part of the 50S ribosomal subunit.

Its function is as follows. Binds directly to 23S rRNA. The L1 stalk is quite mobile in the ribosome, and is involved in E site tRNA release. Functionally, protein L1 is also a translational repressor protein, it controls the translation of the L11 operon by binding to its mRNA. The sequence is that of Large ribosomal subunit protein uL1 (rplA) from Aquifex pyrophilus.